Reading from the N-terminus, the 447-residue chain is Phosphoglucosamine mutase (447 aa).

Ser100 (phosphoserine intermediate) is an active-site residue. Residues Ser100, Asp239, Asp241, and Asp243 each coordinate Mg(2+). Position 100 is a phosphoserine (Ser100).

This sequence belongs to the phosphohexose mutase family. Mg(2+) is required as a cofactor. Activated by phosphorylation.

The enzyme catalyses alpha-D-glucosamine 1-phosphate = D-glucosamine 6-phosphate. In terms of biological role, catalyzes the conversion of glucosamine-6-phosphate to glucosamine-1-phosphate. This is Phosphoglucosamine mutase from Caldanaerobacter subterraneus subsp. tengcongensis (strain DSM 15242 / JCM 11007 / NBRC 100824 / MB4) (Thermoanaerobacter tengcongensis).